Here is a 348-residue protein sequence, read N- to C-terminus: Mannonate dehydratase (348 aa).

The protein belongs to the mannonate dehydratase family. It depends on Fe(2+) as a cofactor. Mn(2+) is required as a cofactor.

It carries out the reaction D-mannonate = 2-dehydro-3-deoxy-D-gluconate + H2O. It participates in carbohydrate metabolism; pentose and glucuronate interconversion. Functionally, catalyzes the dehydration of D-mannonate. The protein is Mannonate dehydratase of Streptococcus agalactiae serotype V (strain ATCC BAA-611 / 2603 V/R).